A 155-amino-acid chain; its full sequence is Putative pre-16S rRNA nuclease (155 aa).

It belongs to the YqgF nuclease family.

Its subcellular location is the cytoplasm. In terms of biological role, could be a nuclease involved in processing of the 5'-end of pre-16S rRNA. In Xanthomonas campestris pv. campestris (strain 8004), this protein is Putative pre-16S rRNA nuclease.